The chain runs to 101 residues: uncharacterized protein (101 aa).

This is an uncharacterized protein from Gracula (BFDV).